The sequence spans 216 residues: L-fuculose phosphate aldolase (216 aa).

Substrate is bound by residues glycine 28–asparagine 29, threonine 43–glycine 44, and serine 71–serine 72. Catalysis depends on glutamate 73, which acts as the Proton donor/acceptor. Zn(2+) is bound by residues glutamate 73, histidine 92, histidine 94, and histidine 155.

This sequence belongs to the aldolase class II family. AraD/FucA subfamily. In terms of assembly, homotetramer. Zn(2+) serves as cofactor.

It catalyses the reaction L-fuculose 1-phosphate = (S)-lactaldehyde + dihydroxyacetone phosphate. It participates in carbohydrate degradation; L-fucose degradation; L-lactaldehyde and glycerone phosphate from L-fucose: step 3/3. Involved in the degradation of L-fucose and D-arabinose. Catalyzes the reversible cleavage of L-fuculose 1-phosphate (Fuc1P) to yield dihydroxyacetone phosphate (DHAP) and L-lactaldehyde. The chain is L-fuculose phosphate aldolase from Haemophilus influenzae (strain ATCC 51907 / DSM 11121 / KW20 / Rd).